A 258-amino-acid polypeptide reads, in one-letter code: Regulatory protein RecX (258 aa).

The protein belongs to the RecX family.

It localises to the cytoplasm. Modulates RecA activity. This Streptococcus thermophilus (strain ATCC BAA-491 / LMD-9) protein is Regulatory protein RecX.